The sequence spans 147 residues: Protein phosphatase 1 regulatory subunit 14A (147 aa).

Basic residues predominate over residues 1 to 11 (MAAQRLGKRVL). Residues 1–37 (MAAQRLGKRVLSKLQSPSRARGPGGSPGGLQKRHARV) are disordered. Ser-26 carries the phosphoserine modification. Positions 35-120 (ARVTVKYDRR…LLVKLRGLHK (86 aa)) are inhibitory. Thr-38 carries the phosphothreonine modification. Positions 118-147 (LHKQPGLRQPSPSGDGSLSPRQDRARTAPP) are disordered. Residues 127–137 (PSPSGDGSLSP) show a composition bias toward polar residues. Phosphoserine is present on residues Ser-128, Ser-134, and Ser-136. Positions 138–147 (RQDRARTAPP) are enriched in basic and acidic residues.

The protein belongs to the PP1 inhibitor family. In terms of processing, phosphorylation of Thr-38 induces a conformation change. As to expression, detected in aorta smooth muscle and bladder.

It is found in the cytoplasm. Its function is as follows. Inhibitor of PPP1CA. Has over 1000-fold higher inhibitory activity when phosphorylated, creating a molecular switch for regulating the phosphorylation status of PPP1CA substrates and smooth muscle contraction. In Sus scrofa (Pig), this protein is Protein phosphatase 1 regulatory subunit 14A (CPI17).